The sequence spans 2670 residues: MNEMSSFLHIGDIVSLYAEGSVNGFISTLGLVDDRCVVEPAAGDLDNPPKKFRDCLFKVCPMNRYSAQKQYWKAKQTKQDKEKIADVVLLQKLQHAAQMEQKQNDTENKKVHGDVVKYGSVIQLLHMKSNKYLTVNKRLPALLEKNAMRVTLDATGNEGSWLFIQPFWKLRSNGDNVVVGDKVILNPVNAGQPLHASNYELSDNAGCKEVNSVNCNTSWKINLFMQFRDHLEEVLKGGDVVRLFHAEQEKFLTCDEYRGKLQVFLRTTLRQSATSATSSNALWEVEVVHHDPCRGGAGHWNGLYRFKHLATGNYLAAEENPSYKGDVSDPKAAGLGAQGRTGRRNAGEKIKYRLVAVPHGNDIASLFELDPTTLQKTDSFVPRNSYVRLRHLCTNTWIQSTNAPIDVEEERPIRLMLGTCPTKEDKEAFAIVSVPVSEIRDLDFANDASSMLASAVEKLNEGFISQNDRRFVIQLLEDLVFFVSDVPNNGQNVLDIMVTKPNRERQKLMREQNILKQIFGILKAPFRDKGGEGPLVRLEELSDQKNAPYQYMFRLCYRVLRHSQEDYRKNQEHIAKQFGMMQSQIGYDILAEDTITALLHNNRKLLEKHITKTEVETFVSLVRKNREPRFLDYLSDLCVSNRIAIPVTQELICKCVLDPKNSDILIQTELRPVKEMAQSHEYLSIEYSEEEVWLTWTDRNNEHHEKSVRQLAQEARAGNAHDENVLSYYRYQLKLFARMCLDRQYLAIDEISKQLGVELLFLCMADEMLPFDLRASFCHLMLHVHVDRDPQELVTPVKFARLWTEIPTAITIKDYDSNLNASRDDKKNKFASTMEFVEDYLNNVVSEAVPFANDEKNILTFEVVSLAHNLIYFGFYSFSELLRLTRTLLGIIDCIQAPAAMLQAYEEPGGKNVRRSIQGVGHMMSTMVLSRKQSVFGASSLPAGVGVPEQLDRSKFEDNEHTVVMETKLKILEILQFILNVRLDYRISYLLSVFKKEFVEVFPMQDSGADGTAPAFDSSTATMNLDRIGEQAEAMFGVGKTSSMLEVDDEGGRMFLRVLLHLTMHDYPSLVSGALQLLFKHFSQRQEAMHTFKQVQLLISAQDVENYKVIKSELDRLRTMVEKSELWVDKKGSVKGEEVEAGATKDKKERPSDEEGFLQPHGEKSSENYQIVKGILERLNKMCGVGEQMRKKQQRLLKNMDAHKVMLDLLQIPYDKSDNKMLEILRYTHQFLQKFCAGNPGNQALLHKHLQLFLTPGLLEAETMQHIFLNNYQLCSEISEPVLQHFVHLLATHGRHVQYLDFLHTVIKAEGKYVKKCQDMIMTELTNAGDDVVVFYNDKASLAHLLDMMKAARDGVEDHSPLMYHISLVDLLAACAEGKNVYTEIKCTSLLPLEDVVTVVTHEDCITEVKMAYVNFVNHCYVDTEVEMKEIYTSNHIWTLFENFTLDMALVCNKREKRLSDPTLEKYVLTVVLDTISAFFSSPFSENSTSLQTHQTIVVQLLQSTTRLLECPWLQQQHKGSVEACVRTLAMVAKSRAILLPMDLDAHMSALLSSGGSCSAAAQRSAANYKTATRTFPRVIPTANQWDYKNIIEKLQDIIMALEERLKPLVQAELSVLVDMLHWPELLFPEGSEAYQRCESGGFLSKLIRHTKGLMESEEKLCVKVLRTLQQMLLKKSKFGDRGNQLRKMLLQNYLQNRKSGARGELTDPTGSGLDQDWSAIAATQCRLDKEGATKLVCDLITSTKNEKIFQESIGLAIRLLDGGNTEIQKSFYNLMTSDKKSERFFKVLHDRMKRAQQETKSTVAVNMSDLGSQPREDREPADPATKGRVSSFSMPSSSRYLLGLGLHRGHDMSERAQNNEMGTSVLIMRPILRFLQLLCENHNRDLQNFLRCQNNKTNYNLVCETLQFLDIMCGSTTGGLGLLGLYINEDNVGLVIQTLETLTEYCQGPCHENQTCIVTHESNGIDIITALILNDISPLCKYRMDLVLQLKDNASKLLLALMESRHDSENAERILISLRPQELVDVIKKAYLQEEERENSEVSPREVGHNIYILALQLSRHNKQLQHLLKPVRRIQEEEAEGISSMLSLNNKQLSQMLKSSAPAQEEEEDPLAYYENHTSQIEIVRQDRSMEQIVFPVPAICQFLTEETKHRLFTTTEQDEQGSKVSDFFDQSSFLHNEMEWQRRLRSMPLIYWFSRRMTLWGSISFNLAVFINIIIAFFYPYVEGASTGVLGSPLISLLFWILICFSIAALFTKRYSVRPLIVALILRSIYYLGIGPTLNILGALNLTNKIVFVVSFVGNRGTFIRGYKAMVMDMEFLYHVGYILTSVLGLFAHELFYSILLFDLIYREETLFNVIKSVTRNGRSILLTALLALILVYLFSIVGFLFLKDDFILEVDRLPGNHSRASPLGMPHGAATFMGTCSGDKMDCVSEVSVPEILEEDEEPDSTERACDTLLMCIVTVMNHGLRNGGGVGDILRKPSKDESLFPARVVYDLLFFFIVIIIVLNLIFGVIIDTFADLRSEKQKKEEILKTTCFICGLERDKFDNKTVSFEEHIKLEHNMWNYLYFIVLVRVKNKTDYTGPESYVAQMIKNKNLDWFPRMRAMSLVSGEGEGEQNEIRILQEKLGSTMKLVSHLTSQLNELKEQMTEQRKRRQRLGFVDVQNCMSR.

Residues 1–2233 (MNEMSSFLHI…YVEGASTGVL (2233 aa)) lie on the Cytoplasmic side of the membrane. MIR domains lie at 113–173 (GDVV…LRSN), 174–224 (GDNV…INLF), 232–288 (EEVL…VEVV), 295–372 (GGAG…LDPT), and 378–434 (DSFV…IVSV). The 1D-myo-inositol 1,4,5-trisphosphate site is built by Arg-266, Leu-269, and Arg-270. 1D-myo-inositol 1,4,5-trisphosphate is bound by residues Arg-503, Lys-507, Arg-510, Tyr-567, Arg-568, and Lys-569. A Ca(2+)-binding site is contributed by Arg-743. Phosphoserine is present on residues Ser-916 and Ser-934. 2 residues coordinate Ca(2+): Glu-1122 and Glu-1125. Positions 1138 to 1153 (EVEAGATKDKKERPSD) are enriched in basic and acidic residues. 2 disordered regions span residues 1138–1164 (EVEA…HGEK) and 1807–1835 (NMSD…SFSM). Phosphoserine occurs at positions 1813, 1832, and 1834. The Ca(2+) site is built by Glu-1881 and Glu-1945. 3 residues coordinate ATP: Ala-1995, Glu-2148, and Lys-2151. A helical transmembrane segment spans residues 2234–2254 (GSPLISLLFWILICFSIAALF). Over 2255–2262 (TKRYSVRP) the chain is Extracellular. Residues 2263-2283 (LIVALILRSIYYLGIGPTLNI) form a helical membrane-spanning segment. The Cytoplasmic portion of the chain corresponds to 2284–2292 (LGALNLTNK). A helical transmembrane segment spans residues 2293-2310 (IVFVVSFVGNRGTFIRGY). Topologically, residues 2311–2324 (KAMVMDMEFLYHVG) are extracellular. A helical transmembrane segment spans residues 2325 to 2345 (YILTSVLGLFAHELFYSILLF). At 2346 to 2367 (DLIYREETLFNVIKSVTRNGRS) the chain is on the cytoplasmic side. A helical transmembrane segment spans residues 2368-2388 (ILLTALLALILVYLFSIVGFL). Topologically, residues 2389-2495 (FLKDDFILEV…ESLFPARVVY (107 aa)) are extracellular. Cysteines 2454 and 2460 form a disulfide. A helical membrane pass occupies residues 2496–2516 (DLLFFFIVIIIVLNLIFGVII). At 2517–2670 (DTFADLRSEK…FVDVQNCMSR (154 aa)) the chain is on the cytoplasmic side. ATP contacts are provided by Cys-2537 and Phe-2538. Cys-2537 provides a ligand contact to Zn(2+). The Zn(2+) site is built by Cys-2540 and His-2557. 4 residues coordinate ATP: Lys-2559, His-2562, Asn-2563, and Met-2564. His-2562 contacts Zn(2+). Thr-2580 provides a ligand contact to Ca(2+). A phosphoserine mark is found at Ser-2608 and Ser-2669.

Belongs to the InsP3 receptor family. As to quaternary structure, homodimer. Homotetramer. Interacts with TRPC1, TRPC3, TRPC4. Interacts with TRPV4. Interacts with SIGMAR1. Found in a complex with AKT1 and PML; this interaction modulates IP3R3-phosphorylation and in turn ITPR3-dependent calcium release. Interacts with IRAG2 (via coiled-coil domain). Interacts with CABP1. Interacts with TMBIM4/LFG4. Interacts with CEMIP. Interacts with TESPA1. Interacts with TMEM203. Interacts with BOK; regulates ITPR3 expression. Interacts with BCL2L10. Interacts with CHGA and CHGB. Post-translationally, phosphorylated by AKT1 on serine and/or threonine residues.

It is found in the endoplasmic reticulum membrane. The protein resides in the cytoplasmic vesicle. It localises to the secretory vesicle membrane. It carries out the reaction Ca(2+)(in) = Ca(2+)(out). Inositol 1,4,5-trisphosphate-gated calcium channel is regulated by cytosolic calcium in a biphasic manner. At low concentrations, cytosolic calcium binds at a high-affinity juxtamembrane domain (JD) calcium binding site, allowing ITPR3 to activate by escaping a low-energy resting state through an ensemble of preactivated states. At high cytosolic calcium concentrations, ITPR3 preferentially enters an inhibited state stabilized by calcium binding at a second, low-affinity cytoplasmic domain (CD) calcium binding site. Functionally, inositol 1,4,5-trisphosphate-gated calcium channel that, upon 1D-myo-inositol 1,4,5-trisphosphate binding, transports calcium from the endoplasmic reticulum lumen to cytoplasm, thus releasing the intracellular calcium and therefore participates in cellular calcium ion homeostasis. 1D-myo-inositol 1,4,5-trisphosphate binds to the ligand-free channel without altering its global conformation, yielding the low-energy resting state, then progresses through resting-to preactivated transitions to the higher energy preactivated state, which increases affinity for calcium, promoting binding of the low basal cytosolic calcium at the juxtamembrane domain (JD) site, favoring the transition through the ensemble of high-energy intermediate states along the trajectory to the fully-open activated state. Upon opening, releases calcium in the cytosol where it can bind to the low-affinity cytoplasmic domain (CD) site and stabilizes the inhibited state to terminate calcium release. The chain is Inositol 1,4,5-trisphosphate-gated calcium channel ITPR3 from Mus musculus (Mouse).